A 330-amino-acid chain; its full sequence is Ketol-acid reductoisomerase (NADP(+)) (330 aa).

One can recognise a KARI N-terminal Rossmann domain in the interval Ala-2–Thr-182. Residues Tyr-25–Gln-28, Ser-51, Ser-53, and Asp-83–Gln-86 contribute to the NADP(+) site. The active site involves His-108. NADP(+) is bound at residue Gly-134. Residues Thr-183–Leu-328 form the KARI C-terminal knotted domain. Mg(2+) contacts are provided by Asp-191, Glu-195, Glu-227, and Glu-231. Ser-252 lines the substrate pocket.

Belongs to the ketol-acid reductoisomerase family. The cofactor is Mg(2+).

It carries out the reaction (2R)-2,3-dihydroxy-3-methylbutanoate + NADP(+) = (2S)-2-acetolactate + NADPH + H(+). The catalysed reaction is (2R,3R)-2,3-dihydroxy-3-methylpentanoate + NADP(+) = (S)-2-ethyl-2-hydroxy-3-oxobutanoate + NADPH + H(+). It functions in the pathway amino-acid biosynthesis; L-isoleucine biosynthesis; L-isoleucine from 2-oxobutanoate: step 2/4. It participates in amino-acid biosynthesis; L-valine biosynthesis; L-valine from pyruvate: step 2/4. Its function is as follows. Involved in the biosynthesis of branched-chain amino acids (BCAA). Catalyzes an alkyl-migration followed by a ketol-acid reduction of (S)-2-acetolactate (S2AL) to yield (R)-2,3-dihydroxy-isovalerate. In the isomerase reaction, S2AL is rearranged via a Mg-dependent methyl migration to produce 3-hydroxy-3-methyl-2-ketobutyrate (HMKB). In the reductase reaction, this 2-ketoacid undergoes a metal-dependent reduction by NADPH to yield (R)-2,3-dihydroxy-isovalerate. The protein is Ketol-acid reductoisomerase (NADP(+)) of Microcystis aeruginosa (strain NIES-843 / IAM M-2473).